The primary structure comprises 318 residues: DNA-directed RNA polymerase subunit alpha 2 (318 aa).

The alpha N-terminal domain (alpha-NTD) stretch occupies residues 1–227 (MALENLLHPT…NQLRNIVDIE (227 aa)). The interval 242–318 (INPILLKHVE…TLIENWPQDL (77 aa)) is alpha C-terminal domain (alpha-CTD).

Belongs to the RNA polymerase alpha chain family. In terms of assembly, homodimer. The RNAP catalytic core consists of 2 alpha, 1 beta, 1 beta' and 1 omega subunit. When a sigma factor is associated with the core the holoenzyme is formed, which can initiate transcription.

It carries out the reaction RNA(n) + a ribonucleoside 5'-triphosphate = RNA(n+1) + diphosphate. Its function is as follows. DNA-dependent RNA polymerase catalyzes the transcription of DNA into RNA using the four ribonucleoside triphosphates as substrates. In Francisella tularensis subsp. novicida (strain U112), this protein is DNA-directed RNA polymerase subunit alpha 2.